The following is a 937-amino-acid chain: Isoleucine--tRNA ligase (937 aa).

Positions 58–68 (PYANGSIHIGH) match the 'HIGH' region motif. E561 contributes to the L-isoleucyl-5'-AMP binding site. The short motif at 602–606 (KMSKS) is the 'KMSKS' region element. K605 lines the ATP pocket. Zn(2+) is bound by residues C900, C903, C920, and C923.

The protein belongs to the class-I aminoacyl-tRNA synthetase family. IleS type 1 subfamily. In terms of assembly, monomer. It depends on Zn(2+) as a cofactor.

Its subcellular location is the cytoplasm. It carries out the reaction tRNA(Ile) + L-isoleucine + ATP = L-isoleucyl-tRNA(Ile) + AMP + diphosphate. In terms of biological role, catalyzes the attachment of isoleucine to tRNA(Ile). As IleRS can inadvertently accommodate and process structurally similar amino acids such as valine, to avoid such errors it has two additional distinct tRNA(Ile)-dependent editing activities. One activity is designated as 'pretransfer' editing and involves the hydrolysis of activated Val-AMP. The other activity is designated 'posttransfer' editing and involves deacylation of mischarged Val-tRNA(Ile). This is Isoleucine--tRNA ligase from Pectobacterium atrosepticum (strain SCRI 1043 / ATCC BAA-672) (Erwinia carotovora subsp. atroseptica).